The primary structure comprises 497 residues: Vacuolar fusion protein CCZ1 homolog B (497 aa).

The interval 244–284 is disordered; the sequence is GTSSWSYLRKGSGSPQISSRSTTVPPLGSGGTLPSGNGSST.

This sequence belongs to the CCZ1 family. In terms of assembly, interacts with MON1.

Its subcellular location is the endosome. It is found in the prevacuolar compartment. Functionally, plays an important role in membrane trafficking through the secretory apparatus. In complex with MON1, acts as a guanine exchange factor (GEF) for RABG3F of the RAB7 protein family. Promotes the exchange of GDP to GTP, converting RABG3F from an inactive GDP-bound form into an active GTP-bound form. The RABG3F active form is involved in protein trafficking from prevacuolar compartments (PVCs) to vacuoles. May serve as a linker between Rab5 and Rab7 protein families in PVCs and mediate PVC maturation. The sequence is that of Vacuolar fusion protein CCZ1 homolog B from Arabidopsis thaliana (Mouse-ear cress).